The following is a 635-amino-acid chain: Threonine--tRNA ligase (635 aa).

The 61-residue stretch at 1–61 (MIQITLPDNS…DHDARLQIIT (61 aa)) folds into the TGS domain. Residues 242–533 (DHRKLGKELD…LIEHHAGALP (292 aa)) are catalytic. Zn(2+) is bound by residues C333, H384, and H510.

It belongs to the class-II aminoacyl-tRNA synthetase family. As to quaternary structure, homodimer. Requires Zn(2+) as cofactor.

The protein localises to the cytoplasm. It catalyses the reaction tRNA(Thr) + L-threonine + ATP = L-threonyl-tRNA(Thr) + AMP + diphosphate + H(+). Functionally, catalyzes the attachment of threonine to tRNA(Thr) in a two-step reaction: L-threonine is first activated by ATP to form Thr-AMP and then transferred to the acceptor end of tRNA(Thr). Also edits incorrectly charged L-seryl-tRNA(Thr). The polypeptide is Threonine--tRNA ligase (Variovorax paradoxus (strain S110)).